We begin with the raw amino-acid sequence, 329 residues long: Ubiquitin carboxyl-terminal hydrolase isozyme L5 (329 aa).

Residues 7 to 225 form the UCH catalytic domain; it reads EWCLMESDPG…IRFNLMAIVS (219 aa). The residue at position 47 (K47) is an N6-succinyllysine. The active-site Nucleophile is the C88. Residue K158 is modified to N6-acetyllysine. H164 functions as the Proton donor in the catalytic mechanism. N6-succinyllysine is present on K289. The region spanning 291-319 is the ULD domain; that stretch reads NYLPFIMELLKTLAEHQQLIPLVEKAKEK. The interval 313-329 is interaction with ADRM1; it reads VEKAKEKQNAKKAQETK.

Belongs to the peptidase C12 family. Component of the 19S (PA700) regulatory complex of the 26S proteasome. Interacts with ADRM1 and NFRKB; in vitro ADRM1 and NFRKB compete for interaction with UCHL5. Component of the INO80 complex; specifically part of a complex module associated with N-terminus of INO80.

It localises to the cytoplasm. It is found in the nucleus. The catalysed reaction is Thiol-dependent hydrolysis of ester, thioester, amide, peptide and isopeptide bonds formed by the C-terminal Gly of ubiquitin (a 76-residue protein attached to proteins as an intracellular targeting signal).. With respect to regulation, activated by ADRM1. Inhibited by interaction with NFRKB. Its function is as follows. Protease that specifically cleaves 'Lys-48'-linked polyubiquitin chains. Deubiquitinating enzyme associated with the 19S regulatory subunit of the 26S proteasome. Putative regulatory component of the INO80 complex; however is inactive in the INO80 complex and is activated by a transient interaction of the INO80 complex with the proteasome via ADRM1. The sequence is that of Ubiquitin carboxyl-terminal hydrolase isozyme L5 (UCHL5) from Homo sapiens (Human).